An 86-amino-acid chain; its full sequence is Large ribosomal subunit protein bL27 (86 aa).

Belongs to the bacterial ribosomal protein bL27 family.

The polypeptide is Large ribosomal subunit protein bL27 (Xanthomonas oryzae pv. oryzae (strain PXO99A)).